Reading from the N-terminus, the 215-residue chain is MRLYLASTSPARLALLRAAGIEPVVVPSQVDEPAAVAAAEAEHGPLSPDAMVQLLARLKAEAVRGALDGEPIDGLVFGGDSAFAIDGALHGKPHRPEIARERWRAQRGRTGRLHSGHWLIDHRGGVENAAVGATAVAAVSFADVTDAEIDAYIASGEPLEVAGAFTIDSLGGPFIRRVEGDPSTVVGLSLSTLRDLVRQLRIEWTELWNRAGVSL.

D80 serves as the catalytic Proton acceptor.

This sequence belongs to the Maf family. A divalent metal cation serves as cofactor.

The protein localises to the cytoplasm. It catalyses the reaction a ribonucleoside 5'-triphosphate + H2O = a ribonucleoside 5'-phosphate + diphosphate + H(+). It carries out the reaction a 2'-deoxyribonucleoside 5'-triphosphate + H2O = a 2'-deoxyribonucleoside 5'-phosphate + diphosphate + H(+). Nucleoside triphosphate pyrophosphatase. May have a dual role in cell division arrest and in preventing the incorporation of modified nucleotides into cellular nucleic acids. The protein is Nucleoside triphosphate pyrophosphatase of Leifsonia xyli subsp. xyli (strain CTCB07).